The sequence spans 394 residues: Elongation factor Tu (394 aa).

Residues 10-204 (KPHVNVGTIG…YLDSYIPEPE (195 aa)) form the tr-type G domain. The interval 19 to 26 (GHVDHGKT) is G1. A GTP-binding site is contributed by 19 to 26 (GHVDHGKT). Mg(2+) is bound at residue threonine 26. Residues 60–64 (GITIN) are G2. The tract at residues 81–84 (DCPG) is G3. GTP contacts are provided by residues 81–85 (DCPGH) and 136–139 (NKCD). The interval 136–139 (NKCD) is G4. The interval 174-176 (SAL) is G5.

It belongs to the TRAFAC class translation factor GTPase superfamily. Classic translation factor GTPase family. EF-Tu/EF-1A subfamily. In terms of assembly, monomer.

Its subcellular location is the cytoplasm. The enzyme catalyses GTP + H2O = GDP + phosphate + H(+). Functionally, GTP hydrolase that promotes the GTP-dependent binding of aminoacyl-tRNA to the A-site of ribosomes during protein biosynthesis. This chain is Elongation factor Tu, found in Pectobacterium atrosepticum (strain SCRI 1043 / ATCC BAA-672) (Erwinia carotovora subsp. atroseptica).